The sequence spans 304 residues: CRISPR-associated endonuclease Cas1 (304 aa).

Mn(2+) is bound by residues Glu148, His204, and Glu219.

It belongs to the CRISPR-associated endonuclease Cas1 family. Homodimer, forms a heterotetramer with a Cas2 homodimer. It depends on Mg(2+) as a cofactor. Mn(2+) is required as a cofactor.

Functionally, CRISPR (clustered regularly interspaced short palindromic repeat), is an adaptive immune system that provides protection against mobile genetic elements (viruses, transposable elements and conjugative plasmids). CRISPR clusters contain spacers, sequences complementary to antecedent mobile elements, and target invading nucleic acids. CRISPR clusters are transcribed and processed into CRISPR RNA (crRNA). Acts as a dsDNA endonuclease. Involved in the integration of spacer DNA into the CRISPR cassette. The protein is CRISPR-associated endonuclease Cas1 of Neisseria meningitidis serogroup C (strain 8013).